An 86-amino-acid polypeptide reads, in one-letter code: Anti-adapter protein IraP (86 aa).

The stretch at 1–47 (MKNLIAELLLKLAQKEEESKELVAQVEALEIIVTAMLRNMAQSEQQM) forms a coiled coil.

The protein belongs to the IraP family. Interacts with RssB.

The protein resides in the cytoplasm. Functionally, inhibits RpoS proteolysis by regulating RssB activity, thereby increasing the stability of the sigma stress factor RpoS especially during phosphate and magnesium starvation, but also in stationary phase and during nitrogen starvation. Its effect on RpoS stability is due to its interaction with RssB, which probably blocks the interaction of RssB with RpoS, and the consequent delivery of the RssB-RpoS complex to the ClpXP protein degradation pathway. The sequence is that of Anti-adapter protein IraP from Salmonella arizonae (strain ATCC BAA-731 / CDC346-86 / RSK2980).